The primary structure comprises 187 residues: Ribosome-recycling factor (187 aa).

This sequence belongs to the RRF family.

The protein resides in the cytoplasm. Its function is as follows. Responsible for the release of ribosomes from messenger RNA at the termination of protein biosynthesis. May increase the efficiency of translation by recycling ribosomes from one round of translation to another. The sequence is that of Ribosome-recycling factor from Bradyrhizobium sp. (strain BTAi1 / ATCC BAA-1182).